A 749-amino-acid chain; its full sequence is Chaperone protein DnaK 1 (749 aa).

Thr-198 carries the post-translational modification Phosphothreonine; by autocatalysis. 3 stretches are compositionally biased toward basic and acidic residues: residues 643-653, 661-694, and 711-724; these read RWDADPWDRSR, YDDR…RDRN, and PTWE…RDRS. Positions 643–749 are disordered; it reads RWDADPWDRS…GWDDDDDEWF (107 aa). The span at 740–749 shows a compositional bias: acidic residues; sequence GWDDDDDEWF.

The protein belongs to the heat shock protein 70 family.

Its function is as follows. Acts as a chaperone. The sequence is that of Chaperone protein DnaK 1 from Synechococcus sp. (strain ATCC 27144 / PCC 6301 / SAUG 1402/1) (Anacystis nidulans).